An 83-amino-acid chain; its full sequence is Greglin (83 aa).

3 positions are modified to phosphoserine: Ser8, Ser11, and Ser15. Intrachain disulfides connect Cys21-Cys55, Cys25-Cys48, Cys33-Cys69, and Cys53-Cys76.

Its function is as follows. Serine protease inhibitor. Inhibits porcine pancreatic elastase with a Ki of 58.3 nM, human neutrophil elastase with a Ki of 3.6 nM, cathepsin G with a Ki of 153.5 nM, chymotrypsin with a Ki of 26.7 nM and subtilisin with a Ki of 0.68 nM. Does not inhibit neutrophil protease 3 or pancreatic trypsin. This is Greglin from Schistocerca gregaria (Desert locust).